The chain runs to 125 residues: Small ribosomal subunit protein uS12c (125 aa).

This sequence belongs to the universal ribosomal protein uS12 family. In terms of assembly, part of the 30S ribosomal subunit.

It localises to the plastid. Its subcellular location is the chloroplast. Its function is as follows. With S4 and S5 plays an important role in translational accuracy. Located at the interface of the 30S and 50S subunits. The polypeptide is Small ribosomal subunit protein uS12c (rps12) (Tupiella akineta (Green alga)).